The primary structure comprises 116 residues: MSTSAVTEPVDIVARLQSAGSAEEFFELLGVAYDPKLLNVARLHILRRMGQYLAGEDLEHLPGDEAAARCKAVLERAYADFVASSPLDQRVFKVLKDAVAPKTPKRPAFVPLDALK.

It belongs to the NifW family. In terms of assembly, homotrimer; associates with NifD.

May protect the nitrogenase Fe-Mo protein from oxidative damage. This chain is Nitrogenase-stabilizing/protective protein NifW, found in Rhodopseudomonas palustris (strain ATCC BAA-98 / CGA009).